The following is a 386-amino-acid chain: Leupaxin (386 aa).

At Met1 the chain carries N-acetylmethionine. Residues 3 to 15 (ELDALLEELERCT) carry the LD motif 1 motif. Ser19 is modified (phosphoserine). A disordered region spans residues 19–52 (SEEYSNPVSCHLDQQSTEESKIPQTPKTLSSQGN). Tyr22 bears the Phosphotyrosine mark. Positions 22-52 (YSNPVSCHLDQQSTEESKIPQTPKTLSSQGN) are enriched in polar residues. Ser54 carries the post-translational modification Phosphoserine. Tyr62 is modified (phosphotyrosine). 2 short sequence motifs (LD motif) span residues 70–82 (NVYS…KESV) and 92–103 (QLDELMAHLSEM). Tyr72 carries the post-translational modification Phosphotyrosine; by LYN. Ser81 carries the phosphoserine modification. 4 LIM zinc-binding domains span residues 150–208 (GYCA…RLFS), 209–267 (PRCA…AMFS), 268–326 (PKCG…HRRG), and 327–386 (TLCH…LFSQ).

It belongs to the paxillin family. Interacts with unphosphorylated ITGA4. Interacts with AR and SRF. Interacts with PTK2B/PYK2, PTPN22 and PTPN12. Interacts (via LD motif 3) with LYN and the interaction is induced upon B-cell antigen receptor (BCR) activation. Interacts (via LD motif 3) with PTK2/FAK. In terms of processing, phosphorylated on tyrosine residues. Phosphorylation on Tyr-72 is important for its inhibitory function. Bombesin stimulates phosphorylation on Tyr-22, Tyr-62 and Tyr-72. In terms of tissue distribution, expressed in osteoclasts (at protein level). Highly expressed in vascular smooth muscle.

It is found in the cytoplasm. Its subcellular location is the cell junction. It localises to the focal adhesion. The protein resides in the nucleus. The protein localises to the perinuclear region. It is found in the cell projection. Its subcellular location is the podosome. It localises to the cell membrane. Functionally, transcriptional coactivator for androgen receptor (AR) and serum response factor (SRF). Contributes to the regulation of cell adhesion, spreading and cell migration and acts as a negative regulator in integrin-mediated cell adhesion events. Suppresses the integrin-induced tyrosine phosphorylation of paxillin (PXN). May play a critical role as an adapter protein in the formation of the adhesion zone in osteoclasts. Negatively regulates B-cell antigen receptor (BCR) signaling. The polypeptide is Leupaxin (Lpxn) (Mus musculus (Mouse)).